A 201-amino-acid chain; its full sequence is Protein ripply1 (201 aa).

The disordered stretch occupies residues 1–29 (MDPAASPAAAPPAAPAAAPAADPAADPAA). Residues 15–29 (PAAAPAADPAADPAA) are compositionally biased toward low complexity. The WRPW motif motif lies at 57 to 60 (AYLW). The interval 99–134 (HPVRLYWPKSHSFDYLYSAGEILLNNFPVQATINLY) is ripply homology domain. Residues 136–174 (DSDSADNEEDKEEEEEEEEEEDDEEEEEDEDKDVNENEP) show a composition bias toward acidic residues. Positions 136 to 201 (DSDSADNEED…SPDPHSACPN (66 aa)) are disordered.

Belongs to the ripply family. In terms of tissue distribution, expressed in the anterior presomitic mesoderm and somites of stage E9.5 dpc embryos. Also expressed in tongue, diaphragm and intercostal muscles at 16.5 dpc.

It localises to the nucleus. In terms of biological role, plays a role in somitogenesis. Essential for transcriptional repression of the segmental patterning genes, thus terminating the segmentation program in the presomitic mesoderm, and also required for the maintenance of rostrocaudal polarity in somites. The sequence is that of Protein ripply1 from Mus musculus (Mouse).